The chain runs to 637 residues: Poly(U)-binding-splicing factor hfp (637 aa).

Basic and acidic residues-rich tracts occupy residues 1-20 (MGSN…REIS) and 28-37 (TRSDSGKSTD). Residues 1–41 (MGSNDRASRSPRSDDQREISDMPATKRTRSDSGKSTDSKIP) are disordered. Phosphoserine occurs at positions 13 and 30. 2 RRM domains span residues 130–208 (CRVY…RPSN) and 227–305 (NRIY…RSIT). An RRM 3; atypical domain is found at 537 to 627 (RVIILRNMVG…RRVVAELYDQ (91 aa)).

The protein belongs to the RRM half pint family. As to quaternary structure, interacts with enc. However, given the cytoplasmic localization of enc, the relevance of such interaction is unclear. In terms of tissue distribution, expressed in all germline cells and within the follicle cell.

The protein resides in the nucleus. Its function is as follows. Splicing factor that regulates oogenesis and controls both mitosis and mRNA localization in the germline by regulating mRNA splicing of a subset of genes within the ovary. Probably acts by regulating the alternative splice site selection of the otu transcript. Also regulates the alternative splicing of eIF4E1 and grk, while it is not involved in the splicing of par-1, sqd or psq. Involved in the alternative splicing of the bicistronic pre-mRNA encoding Kdm3 and CG8176; required for the efficient production of mRNA encoding Kdm3 and Kdm3-mediated regulation of rhino-dependent piRNA production. The chain is Poly(U)-binding-splicing factor hfp from Drosophila melanogaster (Fruit fly).